The following is a 552-amino-acid chain: Membrane protein insertase YidC (552 aa).

Residues 3–23 form a helical membrane-spanning segment; sequence IKRTVLWVIFFMSAVMLFDNW. Residues 36-59 are disordered; it reads SATPTRTVGSAAPGTTTPGTQPAD. Residues 42–59 show a composition bias toward low complexity; it reads TVGSAAPGTTTPGTQPAD. 3 helical membrane-spanning segments follow: residues 364–384, 430–450, and 504–524; these read WGWS…PLSA, FGGC…YWVL, and MMFM…GLVL.

The protein belongs to the OXA1/ALB3/YidC family. Type 1 subfamily. As to quaternary structure, interacts with the Sec translocase complex via SecD. Specifically interacts with transmembrane segments of nascent integral membrane proteins during membrane integration.

The protein localises to the cell inner membrane. Its function is as follows. Required for the insertion and/or proper folding and/or complex formation of integral membrane proteins into the membrane. Involved in integration of membrane proteins that insert both dependently and independently of the Sec translocase complex, as well as at least some lipoproteins. Aids folding of multispanning membrane proteins. This Paraburkholderia xenovorans (strain LB400) protein is Membrane protein insertase YidC.